The chain runs to 689 residues: Glycine--tRNA ligase beta subunit (689 aa).

Belongs to the class-II aminoacyl-tRNA synthetase family. In terms of assembly, tetramer of two alpha and two beta subunits.

The protein resides in the cytoplasm. The enzyme catalyses tRNA(Gly) + glycine + ATP = glycyl-tRNA(Gly) + AMP + diphosphate. This Edwardsiella ictaluri (strain 93-146) protein is Glycine--tRNA ligase beta subunit.